The sequence spans 943 residues: Coiled-coil and C2 domain-containing protein 1A (943 aa).

Threonine 91 bears the Phosphothreonine mark. 2 disordered regions span residues 186-250 (NEAD…CSPL) and 300-337 (DLSR…VPQP). 2 stretches are compositionally biased toward low complexity: residues 195-206 (ASGKGAAAGHSH) and 229-238 (APSTTTPTSA). Serine 248 bears the Phosphoserine mark. Residues 304 to 319 (LPPPPDQLSPEPPLPA) show a composition bias toward pro residues. Residues 339-385 (RNLLEALEQRMERYHVAAAQAKAKGDQRKARMHERIVKQYQDAIRAH) are a coiled coil. The segment at 430-483 (NHDEGSDDEEEETPKKQNTPAASTTQLKSSPSKAPPSGPAPAGKAAPKGTSNRA) is disordered. Serine 435 is modified (phosphoserine). Over residues 445–456 (KQNTPAASTTQL) the composition is skewed to polar residues. A compositionally biased stretch (low complexity) spans 469–478 (APAGKAAPKG). A coiled-coil region spans residues 477-510 (KGTSNRAQQQLAFLEGRKKQLLQAALRAKQKNDV). The region spanning 630–764 (RFEQRTFSVI…ETACEVHEIL (135 aa)) is the C2 domain.

Belongs to the CC2D1 family. In terms of tissue distribution, highly expressed in brain, expression is enriched in the gray matter and strongest in the olfactory bulb.

It localises to the cytoplasm. The protein localises to the nucleus. Its subcellular location is the cytoskeleton. The protein resides in the microtubule organizing center. It is found in the centrosome. Transcription factor that binds specifically to the DRE (dual repressor element) and represses HTR1A gene transcription in neuronal cells. The combination of calcium and ATP specifically inactivates the binding with FRE. May play a role in the altered regulation of HTR1A associated with anxiety and major depression. Mediates HDAC-independent repression of HTR1A promoter in neuronal cell. Performs essential function in controlling functional maturation of synapses. In Mus musculus (Mouse), this protein is Coiled-coil and C2 domain-containing protein 1A (Cc2d1a).